The sequence spans 152 residues: Endoribonuclease YbeY (152 aa).

Residues His-118, His-122, and His-128 each contribute to the Zn(2+) site.

Belongs to the endoribonuclease YbeY family. It depends on Zn(2+) as a cofactor.

The protein localises to the cytoplasm. Single strand-specific metallo-endoribonuclease involved in late-stage 70S ribosome quality control and in maturation of the 3' terminus of the 16S rRNA. The polypeptide is Endoribonuclease YbeY (Lacticaseibacillus paracasei (strain ATCC 334 / BCRC 17002 / CCUG 31169 / CIP 107868 / KCTC 3260 / NRRL B-441) (Lactobacillus paracasei)).